The chain runs to 1018 residues: Contactin-1 (1018 aa).

The first 20 residues, 1–20 (MKMWLLFSLLVIISFKTCLS), serve as a signal peptide directing secretion. 6 consecutive Ig-like C2-type domains span residues 41-131 (PIFE…ATLS), 137-223 (PFPP…KSVF), 241-326 (PADI…ARIY), 331-407 (PEWV…AELK), 413-500 (PTFE…GTLV), and 504-601 (PTRI…LVVR). Cystine bridges form between Cys65–Cys114 and Cys158–Cys211. 2 N-linked (GlcNAc...) asparagine glycosylation sites follow: Asn208 and Asn258. Cysteines 263 and 310 form a disulfide. Asn338 carries an N-linked (GlcNAc...) asparagine glycan. 2 disulfide bridges follow: Cys352–Cys391 and Cys436–Cys484. 4 N-linked (GlcNAc...) asparagine glycosylation sites follow: Asn457, Asn473, Asn494, and Asn521. Cysteines 526 and 583 form a disulfide. An N-linked (GlcNAc...) asparagine glycan is attached at Asn591. 4 consecutive Fibronectin type-III domains span residues 606–704 (PPGG…TDGA), 709–806 (APSD…SAQD), 811–906 (APTA…APPS), and 907–1000 (QPPR…ILSP). 2 disordered regions span residues 698–718 (KIKT…GGGG) and 891–910 (PPSD…QPPR). The GPI-anchor amidated serine moiety is linked to residue Ser999. Residues 1000 to 1018 (PCLLGFLLPALGILVYLEF) constitute a propeptide, removed in mature form.

Belongs to the immunoglobulin superfamily. Contactin family. Monomer. Interacts with CNTNAP1 in cis form. Binds to the carbonic-anhydrase like domain of PTPRZ1. Interacts with NOTCH1 and TNR. Detected in a complex with NRCAM and PTPRB. Interacts with TASOR.

The protein localises to the cell membrane. Its function is as follows. Contactins mediate cell surface interactions during nervous system development. Involved in the formation of paranodal axo-glial junctions in myelinated peripheral nerves and in the signaling between axons and myelinating glial cells via its association with CNTNAP1. Participates in oligodendrocytes generation by acting as a ligand of NOTCH1. Its association with NOTCH1 promotes NOTCH1 activation through the released notch intracellular domain (NICD) and subsequent translocation to the nucleus. Interaction with TNR induces a repulsion of neurons and an inhibition of neurite outgrowth. The polypeptide is Contactin-1 (CNTN1) (Bos taurus (Bovine)).